The chain runs to 230 residues: uncharacterized protein (230 aa).

The first 21 residues, 1–21 (MARYDARLRGIGKAHACSAFA), serve as a signal peptide directing secretion. The tract at residues 47 to 190 (SASVQENFIA…TVQTSSSGDP (144 aa)) is disordered. The segment covering 141–150 (PQSQTSANSQ) has biased composition (polar residues). Residues 151 to 165 (KKPEIRCRERSKNAR) are compositionally biased toward basic and acidic residues. Polar residues predominate over residues 173–188 (AVATNEAETVQTSSSG).

The protein to R.meliloti RA0936 and y4aO.

This is an uncharacterized protein from Sinorhizobium fredii (strain NBRC 101917 / NGR234).